A 188-amino-acid chain; its full sequence is Elongation factor P (188 aa).

An N6-(3,6-diaminohexanoyl)-5-hydroxylysine modification is found at Lys34.

The protein belongs to the elongation factor P family. Post-translationally, may be beta-lysylated on the epsilon-amino group of Lys-34 by the combined action of EpmA and EpmB, and then hydroxylated on the C5 position of the same residue by EpmC (if this protein is present). Lysylation is critical for the stimulatory effect of EF-P on peptide-bond formation. The lysylation moiety may extend toward the peptidyltransferase center and stabilize the terminal 3-CCA end of the tRNA. Hydroxylation of the C5 position on Lys-34 may allow additional potential stabilizing hydrogen-bond interactions with the P-tRNA.

Its subcellular location is the cytoplasm. It functions in the pathway protein biosynthesis; polypeptide chain elongation. In terms of biological role, involved in peptide bond synthesis. Alleviates ribosome stalling that occurs when 3 or more consecutive Pro residues or the sequence PPG is present in a protein, possibly by augmenting the peptidyl transferase activity of the ribosome. Modification of Lys-34 is required for alleviation. This is Elongation factor P from Actinobacillus pleuropneumoniae serotype 5b (strain L20).